Consider the following 240-residue polypeptide: MWKILETCSCFLVVAVLSGLGKAQPESFSGSAVTDDSTSGANKRGWSMLRLGRGLQMLRLGKRGGSLDALRSGHQVPMLRAGRGSPDTSGRLDANELYAVLSAILDEPRDQSRRQPPLPRYGRDNNGVARDLLDALASDGESSSNFDLLSSLNNGPSYFRPAPRGGRYKRSLPDAGPADYPSLEDYLVQSRQFARPYSSRAVALPRIGRFSGSPRLQAKAVPRPRIGRQESQMREAKSAE.

Positions methionine 1–alanine 23 are cleaved as a signal peptide. A disordered region spans residues alanine 23 to arginine 44. Residues glutamine 24 to arginine 44 constitute a propeptide that is removed on maturation. Over residues glutamate 26–alanine 41 the composition is skewed to polar residues. Leucine amide is present on residues leucine 51 and leucine 60. 2 propeptides (connecting peptide) span residues serine 72–alanine 81 and glycine 84–serine 112. At alanine 81 the chain carries Alanine amide. Residue glutamine 115 is modified to Pyrrolidone carboxylic acid. Tyrosine 121 carries the tyrosine amide modification. 10 propeptides (connecting peptide) span residues aspartate 124–aspartate 147, aspartate 124–leucine 148, aspartate 124–leucine 149, aspartate 124–tyrosine 168, aspartate 131–tyrosine 168, leucine 149–tyrosine 168, serine 150–tyrosine 168, serine 151–tyrosine 168, serine 171–serine 190, and serine 171–serine 199. Isoleucine 207 carries the isoleucine amide modification. Positions phenylalanine 210 to lysine 219 are excised as a propeptide. Positions glycine 212 to glutamate 240 are disordered. Isoleucine 226 carries the isoleucine amide modification. A propeptide spanning residues glycine 227–glutamate 240 is cleaved from the precursor. Residues glycine 227–glutamate 240 are compositionally biased toward basic and acidic residues.

As to expression, expressed in the pedal-buccal projection neurons in the pedal ganglion.

It is found in the secreted. Functionally, MMG2-DPs (Myomodulin gene 2-derived peptides) bias egestive feeding programs toward ingestive ones, and modulate accessory radula closer (ARC) muscle contractions. This Aplysia californica (California sea hare) protein is Myomodulin neuropeptides 2 (MMG2).